The sequence spans 402 residues: MLLAEIISVGTELLFGEIVDSNAAFLARELGARGLTLHRKTVLGDNLERVTQAIGLALSRADLVILGGGLGPTDDDLTREAIAAALNETPTEDPGLISWLEGLYTSRGRVMPQINRKQAWLIPSAEALPNPVGTAPGWYVRTAGNKVIVALPGPPREMQTMWREEVLPRLPLPTRALHATTLHTQGIGESQLAELLGELTRQANPSVATYARKTGVDVRVAASADTPEAARELAAPVLDQVRQTLARWLWGEDTDTLAGAVTRALDSRTLGVIEAGSAGALCTLLADEPTFLDAAVTQDHRRLITLGLTPVTLHAQGLVSEQAARELAAGAREHLGAEVGLAVVTAVQGERAGQAYVALDTGNAQHTAALNWPGNAEQIRERAAVLALALAQRSLTRQEVLA.

It belongs to the CinA family.

This chain is CinA-like protein, found in Deinococcus deserti (strain DSM 17065 / CIP 109153 / LMG 22923 / VCD115).